Consider the following 185-residue polypeptide: Large ribosomal subunit protein bL12c (185 aa).

The transit peptide at Met-1–Val-47 directs the protein to the chloroplast.

The protein belongs to the bacterial ribosomal protein bL12 family.

The protein resides in the plastid. The protein localises to the chloroplast. This chain is Large ribosomal subunit protein bL12c (RPL12-2), found in Oryza sativa subsp. japonica (Rice).